The sequence spans 344 residues: Nicotinate-nucleotide--dimethylbenzimidazole phosphoribosyltransferase (344 aa).

Catalysis depends on glutamate 310, which acts as the Proton acceptor.

This sequence belongs to the CobT family.

It carries out the reaction 5,6-dimethylbenzimidazole + nicotinate beta-D-ribonucleotide = alpha-ribazole 5'-phosphate + nicotinate + H(+). Its pathway is nucleoside biosynthesis; alpha-ribazole biosynthesis; alpha-ribazole from 5,6-dimethylbenzimidazole: step 1/2. Functionally, catalyzes the synthesis of alpha-ribazole-5'-phosphate from nicotinate mononucleotide (NAMN) and 5,6-dimethylbenzimidazole (DMB). The sequence is that of Nicotinate-nucleotide--dimethylbenzimidazole phosphoribosyltransferase from Chromobacterium violaceum (strain ATCC 12472 / DSM 30191 / JCM 1249 / CCUG 213 / NBRC 12614 / NCIMB 9131 / NCTC 9757 / MK).